A 411-amino-acid polypeptide reads, in one-letter code: Lissencephaly-1 homolog (411 aa).

Residues 7-39 (QREELNKAIADYLASNGFMEALESFKKETDMPG) enclose the LisH domain. Residues 54–80 (TSVIRLQKKVMDLEGRLAEAEKEYISG) are a coiled coil. Positions 77-89 (YISGTPSREKRSP) are enriched in basic and acidic residues. Positions 77-96 (YISGTPSREKRSPTEWIPRP) are disordered. WD repeat units follow at residues 104–145 (GHRA…RTIK), 146–187 (GHTD…RTMH), 188–227 (GHDH…CVRT), 230–269 (GHRD…CKLE), 272–334 (EHDH…ALFT), 337–376 (GHDN…CCKT), and 379–411 (AHSH…WECR).

The protein belongs to the WD repeat LIS1/nudF family.

The protein localises to the cytoplasm. The protein resides in the cytoskeleton. Its subcellular location is the microtubule organizing center. It localises to the centrosome. Positively regulates the activity of the minus-end directed microtubule motor protein dynein. May enhance dynein-mediated microtubule sliding by targeting dynein to the microtubule plus end. Required for several dynein- and microtubule-dependent processes. The protein is Lissencephaly-1 homolog of Ixodes scapularis (Black-legged tick).